The sequence spans 135 residues: Class I hydrophobin 15 (135 aa).

The signal sequence occupies residues 1 to 21 (MFAKSATIAIVLAALAGFSAA). Disulfide bonds link Cys-50–Cys-113, Cys-57–Cys-107, Cys-58–Cys-97, and Cys-114–Cys-127. Asn-131 carries an N-linked (GlcNAc...) asparagine glycan.

It belongs to the fungal hydrophobin family. In terms of assembly, self-assembles to form functional amyloid fibrils called rodlets. Self-assembly into fibrillar rodlets occurs spontaneously at hydrophobic:hydrophilic interfaces and the rodlets further associate laterally to form amphipathic monolayers.

It localises to the secreted. The protein resides in the cell wall. Functionally, aerial growth, conidiation, and dispersal of filamentous fungi in the environment rely upon a capability of their secreting small amphipathic proteins called hydrophobins (HPBs) with low sequence identity. Class I can self-assemble into an outermost layer of rodlet bundles on aerial cell surfaces, conferring cellular hydrophobicity that supports fungal growth, development and dispersal; whereas Class II form highly ordered films at water-air interfaces through intermolecular interactions but contribute nothing to the rodlet structure. The polypeptide is Class I hydrophobin 15 (Pleurotus ostreatus (strain PC15) (Oyster mushroom)).